The sequence spans 290 residues: Ribosomal protein L11 methyltransferase (290 aa).

Positions 135, 158, 180, and 227 each coordinate S-adenosyl-L-methionine.

The protein belongs to the methyltransferase superfamily. PrmA family.

The protein resides in the cytoplasm. The catalysed reaction is L-lysyl-[protein] + 3 S-adenosyl-L-methionine = N(6),N(6),N(6)-trimethyl-L-lysyl-[protein] + 3 S-adenosyl-L-homocysteine + 3 H(+). Functionally, methylates ribosomal protein L11. This chain is Ribosomal protein L11 methyltransferase, found in Chelativorans sp. (strain BNC1).